The chain runs to 601 residues: Probable protein arginine N-methyltransferase 3 (601 aa).

A compositionally biased stretch (basic and acidic residues) spans M1–I10. The tract at residues M1–D50 is disordered. Acidic residues-rich tracts occupy residues S14–W27 and N35–D50. The C2H2-type zinc-finger motif lies at C57–H78. The SAM-dependent MTase PRMT-type domain maps to N242–E554. Residues R264, G288, E310, S312, V345, and E346 each coordinate S-adenosyl-L-homocysteine. Catalysis depends on residues E365 and E374.

Belongs to the class I-like SAM-binding methyltransferase superfamily. Protein arginine N-methyltransferase family.

It is found in the cytoplasm. Its subcellular location is the cytosol. The enzyme catalyses L-arginyl-[protein] + S-adenosyl-L-methionine = N(omega)-methyl-L-arginyl-[protein] + S-adenosyl-L-homocysteine + H(+). The catalysed reaction is L-arginyl-[protein] + 2 S-adenosyl-L-methionine = N(omega),N(omega)-dimethyl-L-arginyl-[protein] + 2 S-adenosyl-L-homocysteine + 2 H(+). Protein-arginine N-methyltransferase that catalyzes both the monomethylation and asymmetric dimethylation of the guanidino nitrogens of arginine residues in target proteins, and therefore falls into the group of type I methyltransferases. The sequence is that of Probable protein arginine N-methyltransferase 3 (PRMT3) from Arabidopsis thaliana (Mouse-ear cress).